We begin with the raw amino-acid sequence, 156 residues long: 6,7-dimethyl-8-ribityllumazine synthase (156 aa).

5-amino-6-(D-ribitylamino)uracil is bound by residues Phe22, 57-59 (AYE), and 81-83 (TVI). Residue 86 to 87 (GT) coordinates (2S)-2-hydroxy-3-oxobutyl phosphate. His89 serves as the catalytic Proton donor. Phe114 lines the 5-amino-6-(D-ribitylamino)uracil pocket. Arg128 is a binding site for (2S)-2-hydroxy-3-oxobutyl phosphate.

This sequence belongs to the DMRL synthase family. Forms an icosahedral capsid composed of 60 subunits, arranged as a dodecamer of pentamers.

The enzyme catalyses (2S)-2-hydroxy-3-oxobutyl phosphate + 5-amino-6-(D-ribitylamino)uracil = 6,7-dimethyl-8-(1-D-ribityl)lumazine + phosphate + 2 H2O + H(+). It functions in the pathway cofactor biosynthesis; riboflavin biosynthesis; riboflavin from 2-hydroxy-3-oxobutyl phosphate and 5-amino-6-(D-ribitylamino)uracil: step 1/2. Functionally, catalyzes the formation of 6,7-dimethyl-8-ribityllumazine by condensation of 5-amino-6-(D-ribitylamino)uracil with 3,4-dihydroxy-2-butanone 4-phosphate. This is the penultimate step in the biosynthesis of riboflavin. This chain is 6,7-dimethyl-8-ribityllumazine synthase, found in Salmonella heidelberg (strain SL476).